The primary structure comprises 355 residues: Plasmodial-specific protein LAV1-2 (355 aa).

EF-hand domains are found at residues E151–T186 and N217–D252. Residues D230, N232, N234, T236, E241, D265, D267, S269, D271, E276, D295, D297, S299, Q301, E306, D332, D334, S336, S338, and E343 each contribute to the Ca(2+) site. 2 EF-hand domains span residues L282–P317 and S319–D354.

This chain is Plasmodial-specific protein LAV1-2, found in Physarum polycephalum (Slime mold).